We begin with the raw amino-acid sequence, 292 residues long: Bis(5'-nucleosyl)-tetraphosphatase, symmetrical (292 aa).

The protein belongs to the Ap4A hydrolase family.

It catalyses the reaction P(1),P(4)-bis(5'-adenosyl) tetraphosphate + H2O = 2 ADP + 2 H(+). Functionally, hydrolyzes diadenosine 5',5'''-P1,P4-tetraphosphate to yield ADP. This Yersinia enterocolitica serotype O:8 / biotype 1B (strain NCTC 13174 / 8081) protein is Bis(5'-nucleosyl)-tetraphosphatase, symmetrical.